A 485-amino-acid chain; its full sequence is Glutamate--tRNA ligase (485 aa).

A 'HIGH' region motif is present at residues Pro-12–Thr-22. The short motif at Lys-253–Arg-257 is the 'KMSKS' region element. Residue Lys-256 coordinates ATP.

The protein belongs to the class-I aminoacyl-tRNA synthetase family. Glutamate--tRNA ligase type 1 subfamily. As to quaternary structure, monomer.

It localises to the cytoplasm. The enzyme catalyses tRNA(Glu) + L-glutamate + ATP = L-glutamyl-tRNA(Glu) + AMP + diphosphate. In terms of biological role, catalyzes the attachment of glutamate to tRNA(Glu) in a two-step reaction: glutamate is first activated by ATP to form Glu-AMP and then transferred to the acceptor end of tRNA(Glu). The sequence is that of Glutamate--tRNA ligase from Rhizobium meliloti (strain 1021) (Ensifer meliloti).